Consider the following 301-residue polypeptide: Tyrosine recombinase XerC (301 aa).

The Core-binding (CB) domain maps to 1–89 (MGLDGLAAYL…SWRQYCVWLV (89 aa)). A Tyr recombinase domain is found at 110-290 (RVPKALPQEW…DFDHIARLYD (181 aa)). Residues R151, K175, H242, R245, and H268 contribute to the active site. Y277 functions as the O-(3'-phospho-DNA)-tyrosine intermediate in the catalytic mechanism.

Belongs to the 'phage' integrase family. XerC subfamily. Forms a cyclic heterotetrameric complex composed of two molecules of XerC and two molecules of XerD.

It is found in the cytoplasm. Its function is as follows. Site-specific tyrosine recombinase, which acts by catalyzing the cutting and rejoining of the recombining DNA molecules. The XerC-XerD complex is essential to convert dimers of the bacterial chromosome into monomers to permit their segregation at cell division. It also contributes to the segregational stability of plasmids. This is Tyrosine recombinase XerC from Neisseria meningitidis serogroup B (strain ATCC BAA-335 / MC58).